A 235-amino-acid chain; its full sequence is N,O-diacetylmuramidase (235 aa).

The signal sequence occupies residues 1-17; that stretch reads MKLSLLTVAAAAGAAVA. Residues 29-235 form the Ch-type lysozyme domain; sequence SVQGFDISGY…DQLQRFAKGG (207 aa). Catalysis depends on residues Asp-34, Asp-122, and Glu-124. Residues Cys-132 and Cys-171 are joined by a disulfide bond.

This sequence belongs to the glycosyl hydrolase 25 family.

The protein resides in the secreted. The catalysed reaction is Hydrolysis of (1-&gt;4)-beta-linkages between N-acetylmuramic acid and N-acetyl-D-glucosamine residues in a peptidoglycan and between N-acetyl-D-glucosamine residues in chitodextrins.. This enzyme has both lysozyme (acetylmuramidase) and diacetylmuramidase activities. This is N,O-diacetylmuramidase from Arthroderma benhamiae (strain ATCC MYA-4681 / CBS 112371) (Trichophyton mentagrophytes).